The chain runs to 114 residues: Procyclic form-specific polypeptide A-alpha (114 aa).

The N-terminal stretch at methionine 1–alanine 27 is a signal peptide. The tract at residues serine 33–threonine 95 is disordered. Residues aspartate 47–proline 89 show a composition bias toward acidic residues. Repeat copies occupy residues glycine 48–proline 52, glycine 56–threonine 60, glycine 61–threonine 65, glycine 66–threonine 70, glycine 71–threonine 75, glycine 76–threonine 80, and glycine 81–threonine 85. The interval glycine 48–threonine 85 is 7 X 5 AA tandem repeats of G-P-E-E-[PT]. Glycine 92 is lipidated: GPI-anchor amidated glycine. Positions alanine 93 to phenylalanine 114 are excised as a propeptide.

The protein localises to the cell membrane. Its function is as follows. Major surface antigen of procyclic forms. The sequence is that of Procyclic form-specific polypeptide A-alpha (PARPA-ALPHA) from Trypanosoma brucei brucei.